We begin with the raw amino-acid sequence, 48 residues long: uncharacterized protein (48 aa).

A disordered region spans residues 1-20; the sequence is MLLKNWPSRRIQRDKSKRAG.

This is an uncharacterized protein from Bacillus subtilis (strain 168).